Consider the following 496-residue polypeptide: Probable cytosol aminopeptidase (496 aa).

The Mn(2+) site is built by K266 and D271. K278 is an active-site residue. 3 residues coordinate Mn(2+): D289, D348, and E350. The active site involves R352.

The protein belongs to the peptidase M17 family. Requires Mn(2+) as cofactor.

The protein localises to the cytoplasm. It catalyses the reaction Release of an N-terminal amino acid, Xaa-|-Yaa-, in which Xaa is preferably Leu, but may be other amino acids including Pro although not Arg or Lys, and Yaa may be Pro. Amino acid amides and methyl esters are also readily hydrolyzed, but rates on arylamides are exceedingly low.. It carries out the reaction Release of an N-terminal amino acid, preferentially leucine, but not glutamic or aspartic acids.. Presumably involved in the processing and regular turnover of intracellular proteins. Catalyzes the removal of unsubstituted N-terminal amino acids from various peptides. The chain is Probable cytosol aminopeptidase from Pseudomonas fluorescens (strain SBW25).